A 439-amino-acid chain; its full sequence is Cell division protein FtsA (439 aa).

Belongs to the FtsA/MreB family. Self-interacts. Interacts with FtsZ.

It is found in the cell inner membrane. Cell division protein that is involved in the assembly of the Z ring. May serve as a membrane anchor for the Z ring. The protein is Cell division protein FtsA of Shigella flexneri.